The chain runs to 395 residues: MESKRPRLLEEADKQKKTVRVGLNAPSMLRKNQLGFLRFANYCRIARELRVSCMQRKKVQIHSWDPSSLASDRFNRILANTNTDQLFTVNQVEAGGSKYGIITMRGLTTPELRVYPHKTLYVPNRKVNSMCWASLNHLDSHLLLCFVGLADTPSCAVLLPASLFIGSFPGMRRPGMLCSFQIPDAWSCAWSLSIHAYHSFSTGLSQQVLLTNVVTGHQQSFGTSSDVLAQQFAIMTPLLFNGCRSGEIFGIDLRCGNQGSGWKAICLSHDSAVTSLQILQDGQFLVSSDMTGTIKLWDLRATKCVTQYEGHVNNSAYLPVHVNEEEGVVAAVGQDCYTRIWSLRHGHLLTTIPSPYPASENDIPSVAFSSRLGGFRGAPGLLMAVREDLYCFSYG.

2 WD repeats span residues 268–307 and 312–351; these read SHDS…CVTQ and VNNS…LLTT.

The chain is DDB1- and CUL4-associated factor 4-like protein 2 (DCAF4L2) from Homo sapiens (Human).